The chain runs to 27 residues: Alpha-benincasin (27 aa).

Has weak antifungal activity toward C.comatus and P.piricola but not toward M.arachidicola. Inhibits cell-free translation in rabbit reticulocyte lysate system. This Benincasa hispida (Wax gourd) protein is Alpha-benincasin.